A 281-amino-acid polypeptide reads, in one-letter code: DegV domain-containing protein YqaC (281 aa).

One can recognise a DegV domain in the interval 3-279 (LAVITDSSAD…LNTVAYGISP (277 aa)). The hexadecanoate site is built by threonine 60 and serine 93.

May bind long-chain fatty acids, such as palmitate, and may play a role in lipid transport or fatty acid metabolism. This is DegV domain-containing protein YqaC (yqaC) from Lactococcus lactis subsp. lactis (strain IL1403) (Streptococcus lactis).